The primary structure comprises 128 residues: Sm-like protein LSM1A (128 aa).

The Sm domain occupies 10–85; sequence FFSTSLAAYL…VVLIGELDVE (76 aa).

The protein belongs to the snRNP Sm proteins family. As to quaternary structure, component of the heptameric LSM1-LSM7 complex that forms a seven-membered ring structure with a donut shape. The LSM subunits are arranged in the order LSM1, LSM2, LSM3, LSM6, LSM5, LSM7 and LSM4. LSM1A subunit interacts only with its two neighboring subunits, LSM2 and LSM4. As to expression, expressed in roots, leaves, stems, flowers and siliques.

The protein resides in the cytoplasm. Its subcellular location is the P-body. Its function is as follows. Component of the cytoplasmic LSM1-LSM7 complex which is involved in mRNA degradation by promoting decapping and leading to accurate 5'-3' mRNA decay. LSM1A and LSM1B are essential for the formation of the cytoplasmic LSM1-LSM7 complex which regulates developmental gene expression by the decapping of specific development-related transcripts. Required for P-body formation during heat stress. This chain is Sm-like protein LSM1A, found in Arabidopsis thaliana (Mouse-ear cress).